Reading from the N-terminus, the 245-residue chain is 7-cyano-7-deazaguanine synthase (245 aa).

An ATP-binding site is contributed by 19-29 (FSGGQDSATCL). Cysteine 207, cysteine 222, cysteine 225, and cysteine 228 together coordinate Zn(2+).

It belongs to the QueC family. Zn(2+) serves as cofactor.

The catalysed reaction is 7-carboxy-7-deazaguanine + NH4(+) + ATP = 7-cyano-7-deazaguanine + ADP + phosphate + H2O + H(+). It functions in the pathway purine metabolism; 7-cyano-7-deazaguanine biosynthesis. In terms of biological role, catalyzes the ATP-dependent conversion of 7-carboxy-7-deazaguanine (CDG) to 7-cyano-7-deazaguanine (preQ(0)). This chain is 7-cyano-7-deazaguanine synthase, found in Gluconacetobacter diazotrophicus (strain ATCC 49037 / DSM 5601 / CCUG 37298 / CIP 103539 / LMG 7603 / PAl5).